The primary structure comprises 98 residues: Growth-regulated protein homolog gamma (98 aa).

An N-terminal signal peptide occupies residues 1–29; the sequence is MAPAASSAPRLLRAAMLLLLLVAAGRRAA. Cystine bridges form between Cys-39–Cys-65 and Cys-41–Cys-81.

This sequence belongs to the intercrine alpha (chemokine CxC) family.

The protein resides in the secreted. The sequence is that of Growth-regulated protein homolog gamma from Bos taurus (Bovine).